A 238-amino-acid polypeptide reads, in one-letter code: Endonuclease V (238 aa).

Residues Asp46 and Asp116 each coordinate Mg(2+).

The protein belongs to the endonuclease V family. The cofactor is Mg(2+).

Its subcellular location is the cytoplasm. It catalyses the reaction Endonucleolytic cleavage at apurinic or apyrimidinic sites to products with a 5'-phosphate.. Its function is as follows. DNA repair enzyme involved in the repair of deaminated bases. Selectively cleaves double-stranded DNA at the second phosphodiester bond 3' to a deoxyinosine leaving behind the intact lesion on the nicked DNA. The sequence is that of Endonuclease V from Bacillus velezensis (strain DSM 23117 / BGSC 10A6 / LMG 26770 / FZB42) (Bacillus amyloliquefaciens subsp. plantarum).